A 126-amino-acid chain; its full sequence is Small ribosomal subunit protein uS13 (126 aa).

Positions 99 to 126 (LRGQSTKNNARTRKGKRKTVANKKRVTK) are disordered. Residues 108–126 (ARTRKGKRKTVANKKRVTK) show a composition bias toward basic residues.

The protein belongs to the universal ribosomal protein uS13 family. As to quaternary structure, part of the 30S ribosomal subunit. Forms a loose heterodimer with protein S19. Forms two bridges to the 50S subunit in the 70S ribosome.

Functionally, located at the top of the head of the 30S subunit, it contacts several helices of the 16S rRNA. In the 70S ribosome it contacts the 23S rRNA (bridge B1a) and protein L5 of the 50S subunit (bridge B1b), connecting the 2 subunits; these bridges are implicated in subunit movement. Contacts the tRNAs in the A and P-sites. This chain is Small ribosomal subunit protein uS13, found in Azobacteroides pseudotrichonymphae genomovar. CFP2.